Consider the following 129-residue polypeptide: Flagellar assembly factor FliW 2 (129 aa).

Belongs to the FliW family. Interacts with translational regulator CsrA and flagellin(s).

Its subcellular location is the cytoplasm. Its function is as follows. Acts as an anti-CsrA protein, binds CsrA and prevents it from repressing translation of its target genes, one of which is flagellin. Binds to flagellin and participates in the assembly of the flagellum. The protein is Flagellar assembly factor FliW 2 of Helicobacter pylori (strain HPAG1).